We begin with the raw amino-acid sequence, 107 residues long: Ribonuclease P protein component 4 (107 aa).

Zn(2+)-binding residues include cysteine 66, cysteine 69, cysteine 92, and cysteine 95.

This sequence belongs to the eukaryotic/archaeal RNase P protein component 4 family. Consists of a catalytic RNA component and at least 4-5 protein subunits. The cofactor is Zn(2+).

It localises to the cytoplasm. It carries out the reaction Endonucleolytic cleavage of RNA, removing 5'-extranucleotides from tRNA precursor.. Functionally, part of ribonuclease P, a protein complex that generates mature tRNA molecules by cleaving their 5'-ends. This is Ribonuclease P protein component 4 from Methanosarcina acetivorans (strain ATCC 35395 / DSM 2834 / JCM 12185 / C2A).